Consider the following 308-residue polypeptide: Ornithine carbamoyltransferase (308 aa).

Carbamoyl phosphate-binding positions include 56-59 (STRT), Gln83, Arg107, and 134-137 (HPCQ). L-ornithine is bound by residues Asn165, Asp225, and 229 to 230 (SM). Carbamoyl phosphate contacts are provided by residues 264-265 (CL) and Arg292.

This sequence belongs to the aspartate/ornithine carbamoyltransferase superfamily. OTCase family.

Its subcellular location is the cytoplasm. It catalyses the reaction carbamoyl phosphate + L-ornithine = L-citrulline + phosphate + H(+). Its pathway is amino-acid biosynthesis; L-arginine biosynthesis; L-arginine from L-ornithine and carbamoyl phosphate: step 1/3. Functionally, reversibly catalyzes the transfer of the carbamoyl group from carbamoyl phosphate (CP) to the N(epsilon) atom of ornithine (ORN) to produce L-citrulline. The protein is Ornithine carbamoyltransferase of Nitrobacter winogradskyi (strain ATCC 25391 / DSM 10237 / CIP 104748 / NCIMB 11846 / Nb-255).